The sequence spans 219 residues: ATP-dependent Clp protease proteolytic subunit 1, mitochondrial (219 aa).

Residues 1-23 (MLRRILTTSSVRNLTSSTQARVG) constitute a mitochondrion transit peptide. Catalysis depends on S118, which acts as the Nucleophile. The active site involves H143.

The protein belongs to the peptidase S14 family. Tetradecamer that assembles into a two heptameric rings with a central cavity.

The protein localises to the mitochondrion matrix. The catalysed reaction is Hydrolysis of proteins to small peptides in the presence of ATP and magnesium. alpha-casein is the usual test substrate. In the absence of ATP, only oligopeptides shorter than five residues are hydrolyzed (such as succinyl-Leu-Tyr-|-NHMec, and Leu-Tyr-Leu-|-Tyr-Trp, in which cleavage of the -Tyr-|-Leu- and -Tyr-|-Trp bonds also occurs).. Its function is as follows. Clp cleaves peptides in various proteins in a process that requires ATP hydrolysis. Clp may be responsible for a fairly general and central housekeeping function rather than for the degradation of specific substrates. This Caenorhabditis briggsae protein is ATP-dependent Clp protease proteolytic subunit 1, mitochondrial.